The sequence spans 1060 residues: DNA-directed RNA polymerase subunit beta (1060 aa).

Belongs to the RNA polymerase beta chain family. As to quaternary structure, in plastids the minimal PEP RNA polymerase catalytic core is composed of four subunits: alpha, beta, beta', and beta''. When a (nuclear-encoded) sigma factor is associated with the core the holoenzyme is formed, which can initiate transcription.

The protein localises to the plastid. Its subcellular location is the chloroplast. The catalysed reaction is RNA(n) + a ribonucleoside 5'-triphosphate = RNA(n+1) + diphosphate. In terms of biological role, DNA-dependent RNA polymerase catalyzes the transcription of DNA into RNA using the four ribonucleoside triphosphates as substrates. This Lactuca sativa (Garden lettuce) protein is DNA-directed RNA polymerase subunit beta.